The chain runs to 363 residues: Phosphoserine aminotransferase (363 aa).

Arg-42 serves as a coordination point for L-glutamate. Pyridoxal 5'-phosphate-binding positions include 76–77, Trp-104, Thr-155, Asp-175, and Gln-198; that span reads AR. Lys-199 bears the N6-(pyridoxal phosphate)lysine mark. 240 to 241 is a pyridoxal 5'-phosphate binding site; the sequence is NT.

It belongs to the class-V pyridoxal-phosphate-dependent aminotransferase family. SerC subfamily. In terms of assembly, homodimer. Pyridoxal 5'-phosphate is required as a cofactor.

Its subcellular location is the cytoplasm. It carries out the reaction O-phospho-L-serine + 2-oxoglutarate = 3-phosphooxypyruvate + L-glutamate. It catalyses the reaction 4-(phosphooxy)-L-threonine + 2-oxoglutarate = (R)-3-hydroxy-2-oxo-4-phosphooxybutanoate + L-glutamate. It participates in amino-acid biosynthesis; L-serine biosynthesis; L-serine from 3-phospho-D-glycerate: step 2/3. It functions in the pathway cofactor biosynthesis; pyridoxine 5'-phosphate biosynthesis; pyridoxine 5'-phosphate from D-erythrose 4-phosphate: step 3/5. Functionally, catalyzes the reversible conversion of 3-phosphohydroxypyruvate to phosphoserine and of 3-hydroxy-2-oxo-4-phosphonooxybutanoate to phosphohydroxythreonine. This chain is Phosphoserine aminotransferase (serC), found in Edwardsiella ictaluri (strain 93-146).